We begin with the raw amino-acid sequence, 657 residues long: Keratinocyte proline-rich protein (657 aa).

Disordered regions lie at residues 285 to 320 (QGTYGSYTSQRRSQSTSRCLPPRRLQPSYRSCSPPR), 425 to 493 (HPFP…PSPE), and 517 to 568 (QPVP…CGQP). Positions 292–302 (TSQRRSQSTSR) are enriched in low complexity. Residues 434–444 (QHLDRSPESSR) show a composition bias toward basic and acidic residues. Residue Ser-442 is modified to Phosphoserine. Pro residues-rich tracts occupy residues 449-493 (VPAP…PSPE), 517-530 (QPVPHPAPRPVPRP), and 539-561 (GPRPQPCPLPHPEPMPRPAPCSS).

It is found in the cytoplasm. The protein is Keratinocyte proline-rich protein of Mus musculus (Mouse).